The following is a 361-amino-acid chain: Probable galacturonosyltransferase-like 5 (361 aa).

The Cytoplasmic segment spans residues 1-6; it reads MHWITR. Residues 7–27 form a helical; Signal-anchor for type II membrane protein membrane-spanning segment; it reads FSAFFSAALAMILLSPSLQSF. The Lumenal portion of the chain corresponds to 28–361; sequence SPAAAIRSSH…APYDLYKHSH (334 aa). N-linked (GlcNAc...) asparagine glycosylation is found at Asn218 and Asn234.

It belongs to the glycosyltransferase 8 family.

It is found in the golgi apparatus membrane. Its pathway is glycan metabolism; pectin biosynthesis. Its function is as follows. May be involved in pectin and/or xylans biosynthesis in cell walls. The polypeptide is Probable galacturonosyltransferase-like 5 (GATL5) (Arabidopsis thaliana (Mouse-ear cress)).